The sequence spans 234 residues: Large ribosomal subunit protein uL1 (234 aa).

This sequence belongs to the universal ribosomal protein uL1 family. As to quaternary structure, part of the 50S ribosomal subunit.

Its function is as follows. Binds directly to 23S rRNA. The L1 stalk is quite mobile in the ribosome, and is involved in E site tRNA release. Functionally, protein L1 is also a translational repressor protein, it controls the translation of the L11 operon by binding to its mRNA. In terms of biological role, peptides originating from the N-terminal end of L1 have antibacterial activity against bacteria such as E.coli and B.megaterium and modest antifungal activities. Has no effect on H.pylori itself. Peptides are not hemolytic against mammalian cells. These peptides may be released in the stomach during altruistic lysis to kill other fast growing bacteria. The sequence is that of Large ribosomal subunit protein uL1 from Helicobacter pylori (strain ATCC 700392 / 26695) (Campylobacter pylori).